The sequence spans 138 residues: Fluoride-specific ion channel FluC (138 aa).

The next 4 membrane-spanning stretches (helical) occupy residues 34–54 (FMPK…GACA), 60–80 (MQFG…SFLM), 88–108 (FWGT…VVLV), and 112–132 (LPHA…AWLM). The Na(+) site is built by G95 and T98.

Belongs to the fluoride channel Fluc/FEX (TC 1.A.43) family.

It is found in the cell membrane. The catalysed reaction is fluoride(in) = fluoride(out). With respect to regulation, na(+) is not transported, but it plays an essential structural role and its presence is essential for fluoride channel function. Functionally, fluoride-specific ion channel. Important for reducing fluoride concentration in the cell, thus reducing its toxicity. In Corynebacterium efficiens (strain DSM 44549 / YS-314 / AJ 12310 / JCM 11189 / NBRC 100395), this protein is Fluoride-specific ion channel FluC.